The sequence spans 84 residues: ATP synthase subunit c (84 aa).

A run of 2 helical transmembrane segments spans residues 9 to 29 and 54 to 74; these read IIGASLLLAFAALGTAIGFAI and IVAGLLDAIAMIAVGISLLFI.

It belongs to the ATPase C chain family. As to quaternary structure, F-type ATPases have 2 components, F(1) - the catalytic core - and F(0) - the membrane proton channel. F(1) has five subunits: alpha(3), beta(3), gamma(1), delta(1), epsilon(1). F(0) has three main subunits: a(1), b(2) and c(10-14). The alpha and beta chains form an alternating ring which encloses part of the gamma chain. F(1) is attached to F(0) by a central stalk formed by the gamma and epsilon chains, while a peripheral stalk is formed by the delta and b chains.

It is found in the cell inner membrane. Functionally, f(1)F(0) ATP synthase produces ATP from ADP in the presence of a proton or sodium gradient. F-type ATPases consist of two structural domains, F(1) containing the extramembraneous catalytic core and F(0) containing the membrane proton channel, linked together by a central stalk and a peripheral stalk. During catalysis, ATP synthesis in the catalytic domain of F(1) is coupled via a rotary mechanism of the central stalk subunits to proton translocation. Its function is as follows. Key component of the F(0) channel; it plays a direct role in translocation across the membrane. A homomeric c-ring of between 10-14 subunits forms the central stalk rotor element with the F(1) delta and epsilon subunits. The chain is ATP synthase subunit c from Haemophilus ducreyi (strain 35000HP / ATCC 700724).